Reading from the N-terminus, the 246-residue chain is MLYLHDIWVNWFEGEENGYNVCHFHEWRKDDQIELLDQVPLLKVSPALFHYIENSLSDLPKPLLDDVHQKAYVRKNHERIQLDYCFVVTDGAGVLAVDTIGYQIPIRKSRLIPRQEQLVYEMAAEAEERDYPLPRYEKEYHILSPAPELMCGLTRKERQLKQLLFMALDQLYSTKNTAQMRYWYTEWAPEKYAAIQKMSFDEAWEQLYNETKYGWSERHEQLCENLIKGQPFFEKLWEMEQEPKVN.

The protein belongs to the UPF0736 family.

The sequence is that of UPF0736 protein GK0808 from Geobacillus kaustophilus (strain HTA426).